Here is a 634-residue protein sequence, read N- to C-terminus: 1-phosphatidylinositol 4,5-bisphosphate phosphodiesterase zeta-1 (634 aa).

The region spanning 35-70 is the EF-hand domain; the sequence is CNTIHVKYIFKDNDRLKQGRITIEEFRTIYRIITYR. In terms of domain architecture, PI-PLC X-box spans 155 to 299; the sequence is QDMTHPLTDY…LKFKILVRNK (145 aa). Catalysis depends on residues His-170 and His-215. The disordered stretch occupies residues 312 to 345; it reads GSDMHGKVEEFEEEEEIEQEEDGSGAKEPEPVGD. Residues 321 to 334 show a composition bias toward acidic residues; it reads EFEEEEEIEQEEDG. One can recognise a PI-PLC Y-box domain in the interval 376–492; the sequence is LSDLVIYTKV…GYVLKPRFLR (117 aa). The C2 domain maps to 492 to 615; the sequence is RDKKTKFNPH…RGYRRVPLFS (124 aa).

As to quaternary structure, interacts (via its C2 domain) with PtdIns(3)P and, to a lesser extent, PtdIns(5)P in vitro. Ca(2+) is required as a cofactor.

It is found in the nucleus. The protein resides in the cytoplasm. It localises to the perinuclear region. The enzyme catalyses a 1,2-diacyl-sn-glycero-3-phospho-(1D-myo-inositol-4,5-bisphosphate) + H2O = 1D-myo-inositol 1,4,5-trisphosphate + a 1,2-diacyl-sn-glycerol + H(+). Its function is as follows. The production of the second messenger molecules diacylglycerol (DAG) and inositol 1,4,5-trisphosphate (IP3) is mediated by activated phosphatidylinositol-specific phospholipase C enzymes. In vitro, hydrolyzes PtdIns(4,5)P2 in a Ca(2+)-dependent manner. Triggers intracellular Ca(2+) oscillations in oocytes solely during M phase and is involved in inducing oocyte activation and initiating embryonic development up to the blastocyst stage. Is therefore a strong candidate for the egg-activating soluble sperm factor that is transferred from the sperm into the egg cytoplasm following gamete membrane fusion. May exert an inhibitory effect on phospholipase-C-coupled processes that depend on calcium ions and protein kinase C, including CFTR trafficking and function. This chain is 1-phosphatidylinositol 4,5-bisphosphate phosphodiesterase zeta-1, found in Bos taurus (Bovine).